The primary structure comprises 172 residues: Large ribosomal subunit protein uL10 (172 aa).

This sequence belongs to the universal ribosomal protein uL10 family. As to quaternary structure, part of the ribosomal stalk of the 50S ribosomal subunit. The N-terminus interacts with L11 and the large rRNA to form the base of the stalk. The C-terminus forms an elongated spine to which L12 dimers bind in a sequential fashion forming a multimeric L10(L12)X complex.

Its function is as follows. Forms part of the ribosomal stalk, playing a central role in the interaction of the ribosome with GTP-bound translation factors. This is Large ribosomal subunit protein uL10 from Nitrobacter hamburgensis (strain DSM 10229 / NCIMB 13809 / X14).